Here is a 600-residue protein sequence, read N- to C-terminus: MDTKLTPPWLRQENNLLNPEVTQRLFINQDNIPNLPTEAPQVYLARFLEWVEPLVSKVKFVKAQAAVQDYLNSKACAQIETIIAERAQNTHSSWLANWWVQYAYLTSTGPVSPEVNAPYYLELPTVGWSQAELAAALSAQLWHIYQQVQKRQLTSFSVKDKLFSLDTLQSIFASCQIHRADGDVYFVNDQPANFIVVIKNNVFYKLVIDNSGSLEQLQAQLQLSFVQILDNELSHPPHWNLLTATTTKAESQSLLDQLWAQNPEMLLDIYNSAFIVNLDNVELTTPLQLLRNSTWTPNFNRWHAKGIQLVITKNAQLVILADHTSFDGSSVATLANIFVSKLQKVNTEGASALTPTMLSFPTVDQDKQKYFKQLSKNFKDYVYNAVMFELKWDWFTKPLIKAKGIKNSEAFIHLCYQIAQYQTNKKLQNTYVAVDMRQYFRGRTECLRPLSKQSVAFVKRYCKDPKGTLKQFRKYYPAIESLHFEKTRLAQKGSGVNRHLLGAYLAWNEHQDTIAKPALFETKAWKTIAANPLSTSSIVDKYLRNFSFDPVEPNGIGIAYAIDDTNFRAILSVYQHNLQYLKDWMKHFEQTVKTILKTLK.

His323 (proton acceptor) is an active-site residue. CoA is bound at residue Thr396–Glu409.

This sequence belongs to the carnitine/choline acetyltransferase family.

This Mycoplasma pneumoniae (strain ATCC 29342 / M129 / Subtype 1) (Mycoplasmoides pneumoniae) protein is Putative acetyltransferase MPN_114.